Here is a 152-residue protein sequence, read N- to C-terminus: Putative rho GDP-dissociation inhibitor 2 (152 aa).

This sequence belongs to the Rho GDI family.

Its subcellular location is the cytoplasm. Regulates the GDP/GTP exchange reaction of the Rho proteins by inhibiting the dissociation of GDP from them, and the subsequent binding of GTP to them. This is Putative rho GDP-dissociation inhibitor 2 (rdiB) from Dictyostelium discoideum (Social amoeba).